Here is a 320-residue protein sequence, read N- to C-terminus: Ferrochelatase (320 aa).

The Fe cation site is built by histidine 194 and glutamate 275.

It belongs to the ferrochelatase family.

The protein localises to the cytoplasm. It catalyses the reaction heme b + 2 H(+) = protoporphyrin IX + Fe(2+). Its pathway is porphyrin-containing compound metabolism; protoheme biosynthesis; protoheme from protoporphyrin-IX: step 1/1. Catalyzes the ferrous insertion into protoporphyrin IX. In Xylella fastidiosa (strain M23), this protein is Ferrochelatase.